The following is a 305-amino-acid chain: Translation initiation factor eIF2B subunit alpha (305 aa).

Position 35 is an N6-acetyllysine (Lys35).

This sequence belongs to the eIF-2B alpha/beta/delta subunits family. Component of the translation initiation factor 2B (eIF2B) complex which is a heterodecamer of two sets of five different subunits: alpha, beta, gamma, delta and epsilon. Subunits alpha, beta and delta comprise a regulatory subcomplex and subunits epsilon and gamma comprise a catalytic subcomplex. Within the complex, the hexameric regulatory complex resides at the center, with the two heterodimeric catalytic subcomplexes bound on opposite sides.

The protein localises to the cytoplasm. It is found in the cytosol. Its activity is regulated as follows. Activated by the chemical integrated stress response (ISR) inhibitor ISRIB which stimulates guanine nucleotide exchange factor activity for both phosphorylated and unphosphorylated eIF2. In terms of biological role, acts as a component of the translation initiation factor 2B (eIF2B) complex, which catalyzes the exchange of GDP for GTP on eukaryotic initiation factor 2 (eIF2) gamma subunit. Its guanine nucleotide exchange factor activity is repressed when bound to eIF2 complex phosphorylated on the alpha subunit, thereby limiting the amount of methionyl-initiator methionine tRNA available to the ribosome and consequently global translation is repressed. This Mus musculus (Mouse) protein is Translation initiation factor eIF2B subunit alpha (Eif2b1).